A 341-amino-acid chain; its full sequence is Anthranilate phosphoribosyltransferase (341 aa).

5-phospho-alpha-D-ribose 1-diphosphate contacts are provided by residues Gly79, 82 to 83, Thr87, 89 to 92, 107 to 115, and Ser119; these read GD, NIST, and KHGNRAVSS. Gly79 contributes to the anthranilate binding site. Ser91 contacts Mg(2+). Asn110 serves as a coordination point for anthranilate. Anthranilate is bound at residue Arg165. Mg(2+) is bound by residues Asp224 and Glu225.

It belongs to the anthranilate phosphoribosyltransferase family. As to quaternary structure, homodimer. It depends on Mg(2+) as a cofactor.

The catalysed reaction is N-(5-phospho-beta-D-ribosyl)anthranilate + diphosphate = 5-phospho-alpha-D-ribose 1-diphosphate + anthranilate. It functions in the pathway amino-acid biosynthesis; L-tryptophan biosynthesis; L-tryptophan from chorismate: step 2/5. In terms of biological role, catalyzes the transfer of the phosphoribosyl group of 5-phosphorylribose-1-pyrophosphate (PRPP) to anthranilate to yield N-(5'-phosphoribosyl)-anthranilate (PRA). This is Anthranilate phosphoribosyltransferase from Bacillus cereus (strain B4264).